The following is a 157-amino-acid chain: S-ribosylhomocysteine lyase (157 aa).

His54, His58, and Cys126 together coordinate Fe cation.

This sequence belongs to the LuxS family. Homodimer. Fe cation serves as cofactor.

The catalysed reaction is S-(5-deoxy-D-ribos-5-yl)-L-homocysteine = (S)-4,5-dihydroxypentane-2,3-dione + L-homocysteine. Involved in the synthesis of autoinducer 2 (AI-2) which is secreted by bacteria and is used to communicate both the cell density and the metabolic potential of the environment. The regulation of gene expression in response to changes in cell density is called quorum sensing. Catalyzes the transformation of S-ribosylhomocysteine (RHC) to homocysteine (HC) and 4,5-dihydroxy-2,3-pentadione (DPD). The polypeptide is S-ribosylhomocysteine lyase (Bacillus cytotoxicus (strain DSM 22905 / CIP 110041 / 391-98 / NVH 391-98)).